Reading from the N-terminus, the 254-residue chain is MTAAFTVVIPARYGSSRFPGKPLKTIAGKPMVQLVWEQARKSSAERVVIATDDARIVEACRAFGAEVLLTRDDHNSGTDRLAEVATQLGLAANAIVVNVQGDEPLIPPAVIDQVAANLAKHPEAGMATLAEPIDDVAALFNPNIVKVSTDINGLALTFSRAPLPWARDALARSKDELPADVPYRRHIGIYAYRAGFLHDFVSWGPCWLENTESLEQLRALWNGVRIHVADALEAPPGGVDTPEDLERVRRLLEA.

It belongs to the KdsB family.

It localises to the cytoplasm. The catalysed reaction is 3-deoxy-alpha-D-manno-oct-2-ulosonate + CTP = CMP-3-deoxy-beta-D-manno-octulosonate + diphosphate. Its pathway is nucleotide-sugar biosynthesis; CMP-3-deoxy-D-manno-octulosonate biosynthesis; CMP-3-deoxy-D-manno-octulosonate from 3-deoxy-D-manno-octulosonate and CTP: step 1/1. The protein operates within bacterial outer membrane biogenesis; lipopolysaccharide biosynthesis. Functionally, activates KDO (a required 8-carbon sugar) for incorporation into bacterial lipopolysaccharide in Gram-negative bacteria. The chain is 3-deoxy-manno-octulosonate cytidylyltransferase from Pseudomonas syringae pv. tomato (strain ATCC BAA-871 / DC3000).